A 277-amino-acid chain; its full sequence is MAIKSYKPYTPSRRYMTGLSSEDITAKPSVRSLLVKLPATGGRNNNGRITSRHKEAGAKKLYRIIDFKRRKFGIEGKVEAIEYDPNRNCRIALIAYKDGEKRYIIRPNGLNVGDVIASIDEGSLDIKPGNAMKLRFIPVGTIVHNVELKPGKGAQIARSAGGYAQLMGKEEKYVILRMPSGEMRQVLAECMASIGVVGNEDWANITIGKAGRNRYRGIRPQTRGSAMNPVDHPHGGGEGKKNSGRHPVTPWGKPTKGAKTRRKKASDKLIISRRKGK.

The tract at residues Arg219–Lys277 is disordered. Basic and acidic residues predominate over residues Asp231–Lys241. Residues Lys256 to Lys277 are compositionally biased toward basic residues.

The protein belongs to the universal ribosomal protein uL2 family. Part of the 50S ribosomal subunit. Forms a bridge to the 30S subunit in the 70S ribosome.

Its function is as follows. One of the primary rRNA binding proteins. Required for association of the 30S and 50S subunits to form the 70S ribosome, for tRNA binding and peptide bond formation. It has been suggested to have peptidyltransferase activity; this is somewhat controversial. Makes several contacts with the 16S rRNA in the 70S ribosome. In Campylobacter concisus (strain 13826), this protein is Large ribosomal subunit protein uL2.